We begin with the raw amino-acid sequence, 262 residues long: Nurim (262 aa).

Residues 1–4 lie on the Nuclear side of the membrane; it reads MAPA. The chain crosses the membrane as a helical span at residues 5–28; that stretch reads LLLVPAALASFILAFGTGVEFVRF. Residues 29–58 are Perinuclear space-facing; sequence TSLRPLLGGIPESGGPDARQGWLAALQDQS. A helical transmembrane segment spans residues 59–80; it reads ILVPLAWDLGLLLLFVGQHSLM. Residues 81–97 lie on the Nuclear side of the membrane; that stretch reads ATETVKAWMSRYFGVLQ. Residues 98–114 form a helical membrane-spanning segment; the sequence is RSLYVACTALALQLVMR. At 115–133 the chain is on the perinuclear space side; the sequence is YWEPVPRGPVLWEAQAEPW. The helical transmembrane segment at 134–164 threads the bilayer; that stretch reads ATWVPLLCFVLHVISWLLIFSILLVFDYAEL. The Nuclear portion of the chain corresponds to 165-191; sequence MGLKQVYYHVLGLGEPLALKSPRALRL. A helical transmembrane segment spans residues 192-210; the sequence is FSHLRHPVCVELLTVLWVV. Residues 211-216 lie on the Perinuclear space side of the membrane; the sequence is PTLGTD. Residues 217 to 234 form a helical membrane-spanning segment; it reads RLLLALLLTLYLGLAHGL. Residues 235–262 are Nuclear-facing; sequence DQQDLRYLRAQLQRKLHLLSRPQDGEAE.

This sequence belongs to the nurim family.

The protein resides in the nucleus inner membrane. In Sus scrofa (Pig), this protein is Nurim (NRM).